Consider the following 229-residue polypeptide: Probable endo-1,4-beta-xylanase A (229 aa).

Residues 1-18 form the signal peptide; the sequence is MVSFKYLFLAASALGALA. Residues N30 and N100 are each glycosylated (N-linked (GlcNAc...) asparagine). The GH11 domain occupies 41-229; the sequence is AGTPSSTGWN…SSGSSSITVY (189 aa). The Nucleophile role is filled by E125. E216 (proton donor) is an active-site residue.

It belongs to the glycosyl hydrolase 11 (cellulase G) family.

The protein resides in the secreted. The catalysed reaction is Endohydrolysis of (1-&gt;4)-beta-D-xylosidic linkages in xylans.. It functions in the pathway glycan degradation; xylan degradation. In terms of biological role, endo-1,4-beta-xylanase involved in the hydrolysis of xylan, a major structural heterogeneous polysaccharide found in plant biomass representing the second most abundant polysaccharide in the biosphere, after cellulose. In Aspergillus clavatus (strain ATCC 1007 / CBS 513.65 / DSM 816 / NCTC 3887 / NRRL 1 / QM 1276 / 107), this protein is Probable endo-1,4-beta-xylanase A (xlnA).